Reading from the N-terminus, the 95-residue chain is Large ribosomal subunit protein uL23 (95 aa).

Belongs to the universal ribosomal protein uL23 family. As to quaternary structure, part of the 50S ribosomal subunit. Contacts protein L29, and trigger factor when it is bound to the ribosome.

Its function is as follows. One of the early assembly proteins it binds 23S rRNA. One of the proteins that surrounds the polypeptide exit tunnel on the outside of the ribosome. Forms the main docking site for trigger factor binding to the ribosome. The protein is Large ribosomal subunit protein uL23 of Geobacillus kaustophilus (strain HTA426).